Consider the following 179-residue polypeptide: ATP-dependent protease subunit HslV (179 aa).

Thr-7 is an active-site residue. The Na(+) site is built by Gly-162, Cys-165, and Thr-168.

Belongs to the peptidase T1B family. HslV subfamily. A double ring-shaped homohexamer of HslV is capped on each side by a ring-shaped HslU homohexamer. The assembly of the HslU/HslV complex is dependent on binding of ATP.

Its subcellular location is the cytoplasm. The catalysed reaction is ATP-dependent cleavage of peptide bonds with broad specificity.. Its activity is regulated as follows. Allosterically activated by HslU binding. Its function is as follows. Protease subunit of a proteasome-like degradation complex believed to be a general protein degrading machinery. The chain is ATP-dependent protease subunit HslV from Bordetella bronchiseptica (strain ATCC BAA-588 / NCTC 13252 / RB50) (Alcaligenes bronchisepticus).